A 78-amino-acid chain; its full sequence is uncharacterized protein (78 aa).

This is an uncharacterized protein from Helicobacter pylori (strain J99 / ATCC 700824) (Campylobacter pylori J99).